The sequence spans 341 residues: Putative casein kinase I C03C10.2 (341 aa).

A Protein kinase domain is found at 50 to 326 (WSIEGVIGNG…KCLYSPKSLL (277 aa)). Residues 56 to 64 (IGNGGYGQI) and Lys79 contribute to the ATP site. The Proton acceptor role is filled by Asp173.

Belongs to the protein kinase superfamily. CK1 Ser/Thr protein kinase family. Casein kinase I subfamily.

The enzyme catalyses L-seryl-[protein] + ATP = O-phospho-L-seryl-[protein] + ADP + H(+). It catalyses the reaction L-threonyl-[protein] + ATP = O-phospho-L-threonyl-[protein] + ADP + H(+). The sequence is that of Putative casein kinase I C03C10.2 from Caenorhabditis elegans.